The following is a 210-amino-acid chain: Large ribosomal subunit protein uL4 (210 aa).

Belongs to the universal ribosomal protein uL4 family. As to quaternary structure, part of the 50S ribosomal subunit.

Its function is as follows. One of the primary rRNA binding proteins, this protein initially binds near the 5'-end of the 23S rRNA. It is important during the early stages of 50S assembly. It makes multiple contacts with different domains of the 23S rRNA in the assembled 50S subunit and ribosome. Functionally, forms part of the polypeptide exit tunnel. The protein is Large ribosomal subunit protein uL4 of Orientia tsutsugamushi (strain Boryong) (Rickettsia tsutsugamushi).